The following is a 529-amino-acid chain: uncharacterized protein (529 aa).

One can recognise an Arf-GAP domain in the interval Q13 to R129. The C4-type zinc finger occupies C28–C51. The span at Q291–T301 shows a compositional bias: basic and acidic residues. 4 disordered regions span residues Q291 to G313, V335 to Y357, K398 to P424, and F468 to K493. Residues S399–A420 show a composition bias toward low complexity. Polar residues predominate over residues N476 to P487.

Functionally, GTPase-activating protein for the ADP ribosylation factor family. This is an uncharacterized protein from Caenorhabditis elegans.